Consider the following 431-residue polypeptide: MVSLEKNDRVMLARQLPLKSVALILAGGRGTRLKDLTNKRAKPAVHFGGKFRIIDFALSNCLNSGIRRIGVITQYQSHTLVQHIQRGWSLFSEEMNEFVDLLPAQQRMKGENWYRGTADAVTQNLDIIRRYKAEYVVILAGDHIYKQDYSRMLIDHVEKGARCTVACMPVPIKEATAFGVMAVDESDKIIDFVEKPANPPAMPGDASKSLASMGIYVFDADYLYELLAADDKDDASSHDFGKDIIPKITREGMAYAHPFPLSCVQSDPQAEPYWRDVGTLEAYWKANLDLASVTPELDMYDQNWPIRTHMESLPPAKFVQDRSGSHGMTLNSLVSGGCIISGSVVVQSVLFPRVRINSFCNIDSAVLLPEVWVGRSCRLRRCVIDRACIIPEGMVIGENAEEDARRFYRSEEGIVLVTREMLRKLQVKQER.

Residue K39 participates in beta-D-fructose 1,6-bisphosphate binding. Positions 40, 46, and 52 each coordinate AMP. Y114 is a binding site for alpha-D-glucose 1-phosphate. Position 130 (R130) interacts with AMP. Residues G179, 194-195, and S212 contribute to the alpha-D-glucose 1-phosphate site; that span reads EK. E370 and R386 together coordinate AMP. Residues 419 to 423 and 429 to 431 contribute to the beta-D-fructose 1,6-bisphosphate site; these read REMLR and QER.

The protein belongs to the bacterial/plant glucose-1-phosphate adenylyltransferase family. Homotetramer.

The enzyme catalyses alpha-D-glucose 1-phosphate + ATP + H(+) = ADP-alpha-D-glucose + diphosphate. The protein operates within glycan biosynthesis; glycogen biosynthesis. Allosterically activated by fructose-1,6-bisphosphate (F16BP) and inhibited by AMP. Its function is as follows. Involved in the biosynthesis of ADP-glucose, a building block required for the elongation reactions to produce glycogen. Catalyzes the reaction between ATP and alpha-D-glucose 1-phosphate (G1P) to produce pyrophosphate and ADP-Glc. This is Glucose-1-phosphate adenylyltransferase from Salmonella paratyphi A (strain ATCC 9150 / SARB42).